We begin with the raw amino-acid sequence, 785 residues long: Endonuclease MutS2 (785 aa).

335 to 342 (GPNTGGKT) lines the ATP pocket. A Smr domain is found at 710-785 (LDLRGERYED…GNGVTIVEFK (76 aa)).

Belongs to the DNA mismatch repair MutS family. MutS2 subfamily. As to quaternary structure, homodimer. Binds to stalled ribosomes, contacting rRNA.

In terms of biological role, endonuclease that is involved in the suppression of homologous recombination and thus may have a key role in the control of bacterial genetic diversity. Functionally, acts as a ribosome collision sensor, splitting the ribosome into its 2 subunits. Detects stalled/collided 70S ribosomes which it binds and splits by an ATP-hydrolysis driven conformational change. Acts upstream of the ribosome quality control system (RQC), a ribosome-associated complex that mediates the extraction of incompletely synthesized nascent chains from stalled ribosomes and their subsequent degradation. Probably generates substrates for RQC. The polypeptide is Endonuclease MutS2 (Listeria monocytogenes serotype 4b (strain CLIP80459)).